Here is a 384-residue protein sequence, read N- to C-terminus: Alanine racemase (384 aa).

The active-site Proton acceptor; specific for D-alanine is Lys-42. N6-(pyridoxal phosphate)lysine is present on Lys-42. Arg-140 lines the substrate pocket. Tyr-271 (proton acceptor; specific for L-alanine) is an active-site residue. Met-319 contacts substrate.

This sequence belongs to the alanine racemase family. As to quaternary structure, homodimer. The cofactor is pyridoxal 5'-phosphate.

It carries out the reaction L-alanine = D-alanine. It functions in the pathway amino-acid biosynthesis; D-alanine biosynthesis; D-alanine from L-alanine: step 1/1. Its function is as follows. Catalyzes the interconversion of L-alanine and D-alanine. The protein is Alanine racemase (alr) of Mycobacterium tuberculosis (strain CDC 1551 / Oshkosh).